Consider the following 419-residue polypeptide: MFGRGPSRKSDNTKFYEILGVPKTAAPEDLKKAYKKAAIKNHPDKGGDPEKFKELAQAYEVLSDPEKREIYDQYGEDALKEGMGGGGGGHDPFDIFSSFFGSGGHPFGSHSRGRRQRRGEDVVHPLKVSLEDVYLGTTKKLSLSRKALCSKCNGKGSKSGASMKCGGCQGSGMKISIRQFGPGMMQQVQHACNDCKGTGETINDRDRCPQCKGEKVVSEKKVLEVNVEKGMQHNQKITFSGQADEAPDTVTGDIVFVIQQKEHPKFKRKGEDLFVEHTISLTEALCGFQFVLTHLDKRQLLIKSKPGEVVKPDSYKAISDEGMPIYQRPFMKGKLYIHFTVEFPESLSPDQTKAIEAVLPKPTKAAISDMEIDDCEETTLHDVNIEDEMKRKAQAQREAYDDDEEDHPGGAQRVQCAQQ.

Residues 14–75 (KFYEILGVPK…EKREIYDQYG (62 aa)) enclose the J domain. Residues 136-220 (GTTKKLSLSR…CKGEKVVSEK (85 aa)) form a CR-type zinc finger. Residues Cys149, Cys152, Cys165, Cys168, Cys192, Cys195, Cys208, and Cys211 each contribute to the Zn(2+) site. CXXCXGXG motif repeat units follow at residues 149 to 156 (CSKCNGKG), 165 to 172 (CGGCQGSG), 192 to 199 (CNDCKGTG), and 208 to 215 (CPQCKGEK). Basic and acidic residues predominate over residues 378 to 391 (TTLHDVNIEDEMKR). Residues 378-419 (TTLHDVNIEDEMKRKAQAQREAYDDDEEDHPGGAQRVQCAQQ) form a disordered region. Cysteine methyl ester is present on Cys416. The S-farnesyl cysteine moiety is linked to residue Cys416. Positions 417–419 (AQQ) are cleaved as a propeptide — removed in mature form.

Belongs to the DnaJ family. A/I subfamily. As to quaternary structure, homodimer. Requires Zn(2+) as cofactor. Post-translationally, farnesylated. In terms of tissue distribution, expressed in both etiolated and light-grown tissues.

The protein localises to the membrane. In terms of biological role, plays a continuous role in plant development probably in the structural organization of compartments. The chain is Chaperone protein dnaJ 2 (ATJ2) from Arabidopsis thaliana (Mouse-ear cress).